We begin with the raw amino-acid sequence, 808 residues long: Protein SQS1 (808 aa).

2 stretches are compositionally biased toward basic residues: residues 1-20 (MAKR…KRGG) and 28-37 (RGSKRGRGGR). 3 disordered regions span residues 1 to 67 (MAKR…GDLS), 151 to 180 (RSKN…DMEI), and 485 to 529 (ETPP…EELG). 2 stretches are compositionally biased toward basic and acidic residues: residues 39 to 48 (RGFEETERSA) and 153 to 179 (KNQE…KDME). Residues 621-683 (GFHVQNIRDE…HTHIMVEKVK (63 aa)) form the R3H domain. The region spanning 748-795 (QDNIGRRMLEKLGWSSGEGLGAHGNKGISIPVMARVKKSKSGLRHSKE) is the G-patch domain. The segment at 764–808 (GEGLGAHGNKGISIPVMARVKKSKSGLRHSKEDEDTGRSSSFRKK) is disordered. The span at 782–791 (RVKKSKSGLR) shows a compositional bias: basic residues.

The protein belongs to the SQS1 family.

Its subcellular location is the cytoplasm. The protein resides in the nucleus. Functionally, may be involved in splicing. The polypeptide is Protein SQS1 (SQS1) (Candida glabrata (strain ATCC 2001 / BCRC 20586 / JCM 3761 / NBRC 0622 / NRRL Y-65 / CBS 138) (Yeast)).